Consider the following 491-residue polypeptide: Glutamyl-tRNA(Gln) amidotransferase subunit A (491 aa).

Active-site charge relay system residues include Lys-79 and Ser-154. Ser-178 serves as the catalytic Acyl-ester intermediate.

Belongs to the amidase family. GatA subfamily. In terms of assembly, heterotrimer of A, B and C subunits.

The catalysed reaction is L-glutamyl-tRNA(Gln) + L-glutamine + ATP + H2O = L-glutaminyl-tRNA(Gln) + L-glutamate + ADP + phosphate + H(+). Functionally, allows the formation of correctly charged Gln-tRNA(Gln) through the transamidation of misacylated Glu-tRNA(Gln) in organisms which lack glutaminyl-tRNA synthetase. The reaction takes place in the presence of glutamine and ATP through an activated gamma-phospho-Glu-tRNA(Gln). The protein is Glutamyl-tRNA(Gln) amidotransferase subunit A of Synechococcus sp. (strain CC9902).